We begin with the raw amino-acid sequence, 123 residues long: Large ribosomal subunit protein uL24 (123 aa).

It belongs to the universal ribosomal protein uL24 family. Part of the 50S ribosomal subunit.

One of two assembly initiator proteins, it binds directly to the 5'-end of the 23S rRNA, where it nucleates assembly of the 50S subunit. In terms of biological role, located at the polypeptide exit tunnel on the outside of the subunit. This chain is Large ribosomal subunit protein uL24, found in Pyrobaculum aerophilum (strain ATCC 51768 / DSM 7523 / JCM 9630 / CIP 104966 / NBRC 100827 / IM2).